The following is an 889-amino-acid chain: Translation initiation factor IF-2 (889 aa).

Disordered regions lie at residues 47–85 (GHLKKQHGDESEAKPNKLTLNRKTKSTLTMGHGSKAKSV) and 206–302 (AEAA…FTKP). Composition is skewed to basic and acidic residues over residues 52–61 (QHGDESEAKP), 214–241 (AAKKLAEENEGRWKEQEAERKAKEKEVV), and 252–263 (AEDKSDSADESG). A tr-type G domain is found at 389–558 (TRAPVVTIMG…LLQSEVLELT (170 aa)). Residues 398–405 (GHVDHGKT) form a G1 region. 398–405 (GHVDHGKT) lines the GTP pocket. The tract at residues 423–427 (GITQH) is G2. The tract at residues 444-447 (DTPG) is G3. GTP-binding positions include 444 to 448 (DTPGH) and 498 to 501 (NKMD). The interval 498-501 (NKMD) is G4. The interval 534–536 (SAK) is G5.

The protein belongs to the TRAFAC class translation factor GTPase superfamily. Classic translation factor GTPase family. IF-2 subfamily.

It localises to the cytoplasm. Functionally, one of the essential components for the initiation of protein synthesis. Protects formylmethionyl-tRNA from spontaneous hydrolysis and promotes its binding to the 30S ribosomal subunits. Also involved in the hydrolysis of GTP during the formation of the 70S ribosomal complex. The polypeptide is Translation initiation factor IF-2 (Colwellia psychrerythraea (strain 34H / ATCC BAA-681) (Vibrio psychroerythus)).